The primary structure comprises 277 residues: uncharacterized protein (277 aa).

The interval 256 to 277 is disordered; the sequence is HTTTTTTSPSFTIPSNSSKGVS.

In terms of biological role, this protein may be involved in virus assembly. Essential for virus function. This is an uncharacterized protein from Saccharolobus solfataricus (Sulfolobus solfataricus).